The chain runs to 372 residues: MDVLHDDTPDLRSLPQERLASLIAGLGEKPFRARQVYRWLHLRGAASLEEMTDVPRALRERLAEGTRLTTLERATEQRSADGTIKWTWRTRDGKLVESVYLPETDRKTLCVSTQVGCAVGCTFCMTGTMGLARNLEPGEIVDQVHRANRRLIELGEGEGPRPLTNLVFMGMGEPLANYRSLKVALDLLLSEDGPNFSHRHVTVSTSGLVPVMRRLGEETQVKLAVSLNATTDAQRDAIMPINRRYPLAELLRACREFPMKQGRRITFEYVMLGGVNDAPEDAERLARLLRGIPAKVNLIPYNENPGLGFAAPAPGAVERFRDLLVARNVTAVVRKNRGTDIAAACGQLAAEGGPGDPRRRAAAALTGTPAAG.

Catalysis depends on E97, which acts as the Proton acceptor. Residues 103–340 (ETDRKTLCVS…AVVRKNRGTD (238 aa)) enclose the Radical SAM core domain. C110 and C345 form a disulfide bridge. The [4Fe-4S] cluster site is built by C117, C121, and C124. Residues 172–173 (GE), S204, 226–228 (SLN), and N302 each bind S-adenosyl-L-methionine. Residue C345 is the S-methylcysteine intermediate of the active site. Residues 350 to 372 (AEGGPGDPRRRAAAALTGTPAAG) form a disordered region. The span at 362–372 (AAALTGTPAAG) shows a compositional bias: low complexity.

It belongs to the radical SAM superfamily. RlmN family. [4Fe-4S] cluster is required as a cofactor.

Its subcellular location is the cytoplasm. It catalyses the reaction adenosine(2503) in 23S rRNA + 2 reduced [2Fe-2S]-[ferredoxin] + 2 S-adenosyl-L-methionine = 2-methyladenosine(2503) in 23S rRNA + 5'-deoxyadenosine + L-methionine + 2 oxidized [2Fe-2S]-[ferredoxin] + S-adenosyl-L-homocysteine. The catalysed reaction is adenosine(37) in tRNA + 2 reduced [2Fe-2S]-[ferredoxin] + 2 S-adenosyl-L-methionine = 2-methyladenosine(37) in tRNA + 5'-deoxyadenosine + L-methionine + 2 oxidized [2Fe-2S]-[ferredoxin] + S-adenosyl-L-homocysteine. Specifically methylates position 2 of adenine 2503 in 23S rRNA and position 2 of adenine 37 in tRNAs. m2A2503 modification seems to play a crucial role in the proofreading step occurring at the peptidyl transferase center and thus would serve to optimize ribosomal fidelity. The protein is Dual-specificity RNA methyltransferase RlmN of Anaeromyxobacter dehalogenans (strain 2CP-C).